Reading from the N-terminus, the 98-residue chain is Prolactin-releasing peptide (98 aa).

Positions 1 to 22 (MKAVGAWLLCLLLLGLALQGAA) are cleaved as a signal peptide. Residue Phe53 is modified to Phenylalanine amide. Residues 58–98 (AAPGDGPRPGPRRELACIPLEGGAEPSRALLGRLTAQLVQE) constitute a propeptide that is removed on maturation.

More abundantly expressed in the brainstem than the hypothalamus.

The protein resides in the secreted. Its function is as follows. Stimulates prolactin (PRL) release and regulates the expression of prolactin through its receptor GPR10. May stimulate lactotrophs directly to secrete PRL. In Ovis aries (Sheep), this protein is Prolactin-releasing peptide (PRLH).